The sequence spans 453 residues: Chromosomal replication initiator protein DnaA (453 aa).

A domain I, interacts with DnaA modulators region spans residues 1-73 (MNISPQYLWN…AQEVASVVGY (73 aa)). The segment at 73 to 112 (YPVDIQLTTAEGETMAMTGEAQSYQEKSLTQIAPESPKLN) is domain II. Positions 113–329 (QLNPRYTFSR…GALIRAIAYT (217 aa)) are domain III, AAA+ region. The ATP site is built by G157, G159, K160, and T161. The domain IV, binds dsDNA stretch occupies residues 330–453 (SISGLSMTVQ…RINMASRTQS (124 aa)).

The protein belongs to the DnaA family. In terms of assembly, oligomerizes as a right-handed, spiral filament on DNA at oriC.

It localises to the cytoplasm. In terms of biological role, plays an essential role in the initiation and regulation of chromosomal replication. ATP-DnaA binds to the origin of replication (oriC) to initiate formation of the DNA replication initiation complex once per cell cycle. Binds the DnaA box (a 9 base pair repeat at the origin) and separates the double-stranded (ds)DNA. Forms a right-handed helical filament on oriC DNA; dsDNA binds to the exterior of the filament while single-stranded (ss)DNA is stabiized in the filament's interior. The ATP-DnaA-oriC complex binds and stabilizes one strand of the AT-rich DNA unwinding element (DUE), permitting loading of DNA polymerase. After initiation quickly degrades to an ADP-DnaA complex that is not apt for DNA replication. Binds acidic phospholipids. In Rippkaea orientalis (strain PCC 8801 / RF-1) (Cyanothece sp. (strain PCC 8801)), this protein is Chromosomal replication initiator protein DnaA.